The following is a 346-amino-acid chain: Probable dual-specificity RNA methyltransferase RlmN (346 aa).

The Proton acceptor role is filled by Glu92. The region spanning 98 to 332 (TDQRLTVCVS…VSLRASRGLD (235 aa)) is the Radical SAM core domain. Cys105 and Cys337 are joined by a disulfide. Positions 112, 116, and 119 each coordinate [4Fe-4S] cluster. S-adenosyl-L-methionine is bound by residues 159–160 (GE), Ser189, 218–220 (SLH), and Asn294. The active-site S-methylcysteine intermediate is the Cys337.

Belongs to the radical SAM superfamily. RlmN family. The cofactor is [4Fe-4S] cluster.

The protein resides in the cytoplasm. The catalysed reaction is adenosine(2503) in 23S rRNA + 2 reduced [2Fe-2S]-[ferredoxin] + 2 S-adenosyl-L-methionine = 2-methyladenosine(2503) in 23S rRNA + 5'-deoxyadenosine + L-methionine + 2 oxidized [2Fe-2S]-[ferredoxin] + S-adenosyl-L-homocysteine. It carries out the reaction adenosine(37) in tRNA + 2 reduced [2Fe-2S]-[ferredoxin] + 2 S-adenosyl-L-methionine = 2-methyladenosine(37) in tRNA + 5'-deoxyadenosine + L-methionine + 2 oxidized [2Fe-2S]-[ferredoxin] + S-adenosyl-L-homocysteine. Specifically methylates position 2 of adenine 2503 in 23S rRNA and position 2 of adenine 37 in tRNAs. In Synechococcus sp. (strain CC9311), this protein is Probable dual-specificity RNA methyltransferase RlmN.